A 290-amino-acid polypeptide reads, in one-letter code: 4-diphosphocytidyl-2-C-methyl-D-erythritol kinase (290 aa).

The active site involves K10. Residue 95 to 105 (PVAAGLAGGSS) participates in ATP binding. D137 is an active-site residue.

This sequence belongs to the GHMP kinase family. IspE subfamily.

It catalyses the reaction 4-CDP-2-C-methyl-D-erythritol + ATP = 4-CDP-2-C-methyl-D-erythritol 2-phosphate + ADP + H(+). It functions in the pathway isoprenoid biosynthesis; isopentenyl diphosphate biosynthesis via DXP pathway; isopentenyl diphosphate from 1-deoxy-D-xylulose 5-phosphate: step 3/6. Functionally, catalyzes the phosphorylation of the position 2 hydroxy group of 4-diphosphocytidyl-2C-methyl-D-erythritol. This Geobacillus thermodenitrificans (strain NG80-2) protein is 4-diphosphocytidyl-2-C-methyl-D-erythritol kinase.